The chain runs to 216 residues: Octanoyltransferase (216 aa).

The 175-residue stretch at 31-205 (STTRDEVWLV…ELVTLLDYEQ (175 aa)) folds into the BPL/LPL catalytic domain. Residues 70–77 (RGGQVTYH), 137–139 (SLG), and 150–152 (GLA) each bind substrate. The Acyl-thioester intermediate role is filled by cysteine 168.

This sequence belongs to the LipB family.

It is found in the cytoplasm. It catalyses the reaction octanoyl-[ACP] + L-lysyl-[protein] = N(6)-octanoyl-L-lysyl-[protein] + holo-[ACP] + H(+). It participates in protein modification; protein lipoylation via endogenous pathway; protein N(6)-(lipoyl)lysine from octanoyl-[acyl-carrier-protein]: step 1/2. In terms of biological role, catalyzes the transfer of endogenously produced octanoic acid from octanoyl-acyl-carrier-protein onto the lipoyl domains of lipoate-dependent enzymes. Lipoyl-ACP can also act as a substrate although octanoyl-ACP is likely to be the physiological substrate. The sequence is that of Octanoyltransferase from Vibrio cholerae serotype O1 (strain ATCC 39541 / Classical Ogawa 395 / O395).